Here is a 221-residue protein sequence, read N- to C-terminus: Protein GrpE (221 aa).

The disordered stretch occupies residues 1–83 (MEQEQKATQE…AKNCRTRSED (83 aa)). Positions 23–32 (QEEKAEERGG) are enriched in basic and acidic residues. Positions 41–53 (ENLQQENTQAQQE) are enriched in low complexity.

Belongs to the GrpE family. In terms of assembly, homodimer.

The protein localises to the cytoplasm. Its function is as follows. Participates actively in the response to hyperosmotic and heat shock by preventing the aggregation of stress-denatured proteins, in association with DnaK and GrpE. It is the nucleotide exchange factor for DnaK and may function as a thermosensor. Unfolded proteins bind initially to DnaJ; upon interaction with the DnaJ-bound protein, DnaK hydrolyzes its bound ATP, resulting in the formation of a stable complex. GrpE releases ADP from DnaK; ATP binding to DnaK triggers the release of the substrate protein, thus completing the reaction cycle. Several rounds of ATP-dependent interactions between DnaJ, DnaK and GrpE are required for fully efficient folding. The polypeptide is Protein GrpE (Geobacillus stearothermophilus (Bacillus stearothermophilus)).